A 500-amino-acid polypeptide reads, in one-letter code: NAD(P)H-quinone oxidoreductase chain 4, chloroplastic (500 aa).

A run of 14 helical transmembrane segments spans residues 4 to 24 (FPWL…IGFL), 37 to 57 (ICIC…HFQL), 87 to 107 (MGPV…AWPV), 113 to 130 (LFHF…GSFS), 134 to 154 (LLLF…LLSL), 167 to 187 (FILY…GMGL), 208 to 228 (ALEI…SPII), 242 to 262 (HYST…YGLV), 272 to 292 (AHSI…IYAA), 305 to 325 (IAYS…SITD), 330 to 350 (GSIL…FLAG), 386 to 406 (LALP…GIIT), 416 to 436 (ILIT…SLSM), and 462 to 482 (LFIL…PDFV).

This sequence belongs to the complex I subunit 4 family.

The protein resides in the plastid. Its subcellular location is the chloroplast thylakoid membrane. It carries out the reaction a plastoquinone + NADH + (n+1) H(+)(in) = a plastoquinol + NAD(+) + n H(+)(out). The enzyme catalyses a plastoquinone + NADPH + (n+1) H(+)(in) = a plastoquinol + NADP(+) + n H(+)(out). This Illicium oligandrum (Star anise) protein is NAD(P)H-quinone oxidoreductase chain 4, chloroplastic.